We begin with the raw amino-acid sequence, 186 residues long: Adenine phosphoribosyltransferase (186 aa).

The protein belongs to the purine/pyrimidine phosphoribosyltransferase family. As to quaternary structure, homodimer.

Its subcellular location is the cytoplasm. It carries out the reaction AMP + diphosphate = 5-phospho-alpha-D-ribose 1-diphosphate + adenine. The protein operates within purine metabolism; AMP biosynthesis via salvage pathway; AMP from adenine: step 1/1. In terms of biological role, catalyzes a salvage reaction resulting in the formation of AMP, that is energically less costly than de novo synthesis. The sequence is that of Adenine phosphoribosyltransferase from Xanthomonas euvesicatoria pv. vesicatoria (strain 85-10) (Xanthomonas campestris pv. vesicatoria).